The chain runs to 499 residues: Ribose import ATP-binding protein RbsA 1 (499 aa).

2 consecutive ABC transporter domains span residues 5–240 and 249–494; these read LEMR…GRSI and TEPG…TAGS. ATP is bound at residue 37 to 44; that stretch reads GENGAGKS.

Belongs to the ABC transporter superfamily. Ribose importer (TC 3.A.1.2.1) family. In terms of assembly, the complex is composed of an ATP-binding protein (RbsA), two transmembrane proteins (RbsC) and a solute-binding protein (RbsB).

The protein localises to the cell membrane. It carries out the reaction D-ribose(out) + ATP + H2O = D-ribose(in) + ADP + phosphate + H(+). Functionally, part of the ABC transporter complex RbsABC involved in ribose import. Responsible for energy coupling to the transport system. This Rubrobacter xylanophilus (strain DSM 9941 / JCM 11954 / NBRC 16129 / PRD-1) protein is Ribose import ATP-binding protein RbsA 1.